The following is a 426-amino-acid chain: MINKKLARSFSLYEWLYYLDHFMLDNIDPTLNRVFYVAKKLGVLKSKAFVFIVGGTNGKGSTCHVLENLLLNSGYRVGLYTSPHLMRYTERVRINGFELEHLYHISAFNDVKYFQNDVLLTRFEFITLSALILFKSYNLDIIILEVGLGGRLDATNILSADVSVITNIDIDHSKILGVNRSSISVEKSGIFRKNKIAIVADNNFPKVAQYLAKKKKVRLRIVNIDWIYKKIEFEWSFCSSKITWLHLPLPRNVSLDSVATALSAVSESGIKINQKVFRSCISEITLCGRFETISYNPIIILDVAHNPHSARYLFKKMSSFKKNGNIFAVVGILKEKNIKDIVSPLIPIVDYWYCITLLTHRSATSSEIIKYLPNHNSQISKNMTVALEKIFDKVTNNDIVLIFGSFITVCEANKFLANKVKNFKLL.

58–61 (GKGS) provides a ligand contact to ATP. Ser-82 contacts Mg(2+). 7,8-dihydropteroate is bound at residue 121–124 (TRFE). A Mg(2+)-binding site is contributed by Glu-145. 7,8-dihydropteroate is bound at residue 152 to 154 (LDA). A Mg(2+)-binding site is contributed by His-172. ATP-binding residues include Arg-289 and Asp-302.

Belongs to the folylpolyglutamate synthase family. In terms of assembly, monomer. Mg(2+) serves as cofactor.

The enzyme catalyses 7,8-dihydropteroate + L-glutamate + ATP = 7,8-dihydrofolate + ADP + phosphate + H(+). It carries out the reaction (6S)-5,6,7,8-tetrahydrofolyl-(gamma-L-Glu)(n) + L-glutamate + ATP = (6S)-5,6,7,8-tetrahydrofolyl-(gamma-L-Glu)(n+1) + ADP + phosphate + H(+). The catalysed reaction is 10-formyltetrahydrofolyl-(gamma-L-Glu)(n) + L-glutamate + ATP = 10-formyltetrahydrofolyl-(gamma-L-Glu)(n+1) + ADP + phosphate + H(+). It catalyses the reaction (6R)-5,10-methylenetetrahydrofolyl-(gamma-L-Glu)(n) + L-glutamate + ATP = (6R)-5,10-methylenetetrahydrofolyl-(gamma-L-Glu)(n+1) + ADP + phosphate + H(+). Its pathway is cofactor biosynthesis; tetrahydrofolate biosynthesis; 7,8-dihydrofolate from 2-amino-4-hydroxy-6-hydroxymethyl-7,8-dihydropteridine diphosphate and 4-aminobenzoate: step 2/2. It functions in the pathway cofactor biosynthesis; tetrahydrofolylpolyglutamate biosynthesis. Its function is as follows. Functions in two distinct reactions of the de novo folate biosynthetic pathway. Catalyzes the addition of a glutamate residue to dihydropteroate (7,8-dihydropteroate or H2Pte) to form dihydrofolate (7,8-dihydrofolate monoglutamate or H2Pte-Glu). Also catalyzes successive additions of L-glutamate to tetrahydrofolate or 10-formyltetrahydrofolate or 5,10-methylenetetrahydrofolate, leading to folylpolyglutamate derivatives. The sequence is that of Dihydrofolate synthase/folylpolyglutamate synthase (folC) from Buchnera aphidicola subsp. Baizongia pistaciae (strain Bp).